The sequence spans 20 residues: Alpha-conotoxin-like ts14a (20 aa).

2 cysteine pairs are disulfide-bonded: Cys3–Cys16 and Cys14–Cys20.

Expressed by the venom duct.

It localises to the secreted. Its function is as follows. Alpha-conotoxins act on postsynaptic membranes, they bind to the nicotinic acetylcholine receptors (nAChR) and thus inhibit them. This Conus tessulatus (Tessellate cone) protein is Alpha-conotoxin-like ts14a.